A 312-amino-acid chain; its full sequence is Polyamine aminopropyltransferase (312 aa).

The PABS domain occupies 7–247 (FFWAQEYFTP…GPLGFALAAQ (241 aa)). Position 36 (Gln-36) interacts with S-methyl-5'-thioadenosine. The spermidine site is built by His-67 and Glu-95. Residues Asp-115 and 147-148 (DA) each bind S-methyl-5'-thioadenosine. The Proton acceptor role is filled by Asp-165. S-methyl-5'-thioadenosine is bound at residue Pro-174.

It belongs to the spermidine/spermine synthase family. Homodimer or homotetramer.

The protein localises to the cytoplasm. The enzyme catalyses S-adenosyl 3-(methylsulfanyl)propylamine + putrescine = S-methyl-5'-thioadenosine + spermidine + H(+). It functions in the pathway amine and polyamine biosynthesis; spermidine biosynthesis; spermidine from putrescine: step 1/1. Functionally, catalyzes the irreversible transfer of a propylamine group from the amino donor S-adenosylmethioninamine (decarboxy-AdoMet) to putrescine (1,4-diaminobutane) to yield spermidine. The sequence is that of Polyamine aminopropyltransferase from Synechococcus sp. (strain JA-3-3Ab) (Cyanobacteria bacterium Yellowstone A-Prime).